Here is a 341-residue protein sequence, read N- to C-terminus: Holliday junction branch migration complex subunit RuvB (341 aa).

Residues 1–182 (MTSSDPTLRP…FGIPTRLQFY (182 aa)) form a large ATPase domain (RuvB-L) region. ATP contacts are provided by residues L21, R22, G63, K66, T67, T68, 129-131 (EDF), R172, Y182, and R219. T67 serves as a coordination point for Mg(2+). A small ATPAse domain (RuvB-S) region spans residues 183–253 (TEDELDLIVA…IADRALTRLG (71 aa)). A head domain (RuvB-H) region spans residues 256–341 (HLGLDLGDRR…KGPGQSDLFG (86 aa)). DNA contacts are provided by R292, R311, and R316.

The protein belongs to the RuvB family. As to quaternary structure, homohexamer. Forms an RuvA(8)-RuvB(12)-Holliday junction (HJ) complex. HJ DNA is sandwiched between 2 RuvA tetramers; dsDNA enters through RuvA and exits via RuvB. An RuvB hexamer assembles on each DNA strand where it exits the tetramer. Each RuvB hexamer is contacted by two RuvA subunits (via domain III) on 2 adjacent RuvB subunits; this complex drives branch migration. In the full resolvosome a probable DNA-RuvA(4)-RuvB(12)-RuvC(2) complex forms which resolves the HJ.

It localises to the cytoplasm. It carries out the reaction ATP + H2O = ADP + phosphate + H(+). In terms of biological role, the RuvA-RuvB-RuvC complex processes Holliday junction (HJ) DNA during genetic recombination and DNA repair, while the RuvA-RuvB complex plays an important role in the rescue of blocked DNA replication forks via replication fork reversal (RFR). RuvA specifically binds to HJ cruciform DNA, conferring on it an open structure. The RuvB hexamer acts as an ATP-dependent pump, pulling dsDNA into and through the RuvAB complex. RuvB forms 2 homohexamers on either side of HJ DNA bound by 1 or 2 RuvA tetramers; 4 subunits per hexamer contact DNA at a time. Coordinated motions by a converter formed by DNA-disengaged RuvB subunits stimulates ATP hydrolysis and nucleotide exchange. Immobilization of the converter enables RuvB to convert the ATP-contained energy into a lever motion, pulling 2 nucleotides of DNA out of the RuvA tetramer per ATP hydrolyzed, thus driving DNA branch migration. The RuvB motors rotate together with the DNA substrate, which together with the progressing nucleotide cycle form the mechanistic basis for DNA recombination by continuous HJ branch migration. Branch migration allows RuvC to scan DNA until it finds its consensus sequence, where it cleaves and resolves cruciform DNA. This Cereibacter sphaeroides (strain ATCC 17029 / ATH 2.4.9) (Rhodobacter sphaeroides) protein is Holliday junction branch migration complex subunit RuvB.